Reading from the N-terminus, the 177-residue chain is Large ribosomal subunit protein uL6 (177 aa).

It belongs to the universal ribosomal protein uL6 family. In terms of assembly, part of the 50S ribosomal subunit.

This protein binds to the 23S rRNA, and is important in its secondary structure. It is located near the subunit interface in the base of the L7/L12 stalk, and near the tRNA binding site of the peptidyltransferase center. The polypeptide is Large ribosomal subunit protein uL6 (Histophilus somni (strain 129Pt) (Haemophilus somnus)).